The primary structure comprises 89 residues: MAYTTEVKKELISKFKVHDADTGSPEVQIALLTHRITYLTEHVKVHKKDHHSRRGLLILVGKRRKLLNYVKNKDVNRYRDIISTLGLRR.

This sequence belongs to the universal ribosomal protein uS15 family. In terms of assembly, part of the 30S ribosomal subunit. Forms a bridge to the 50S subunit in the 70S ribosome, contacting the 23S rRNA.

One of the primary rRNA binding proteins, it binds directly to 16S rRNA where it helps nucleate assembly of the platform of the 30S subunit by binding and bridging several RNA helices of the 16S rRNA. Its function is as follows. Forms an intersubunit bridge (bridge B4) with the 23S rRNA of the 50S subunit in the ribosome. This Desulfosudis oleivorans (strain DSM 6200 / JCM 39069 / Hxd3) (Desulfococcus oleovorans) protein is Small ribosomal subunit protein uS15.